A 333-amino-acid chain; its full sequence is Biotin synthase (333 aa).

A Radical SAM core domain is found at 54 to 283 (FCSNTFDMCS…RAFIRLAGGR (230 aa)). Residues Cys-72, Cys-76, and Cys-79 each coordinate [4Fe-4S] cluster. 4 residues coordinate [2Fe-2S] cluster: Ser-116, Cys-148, Cys-208, and Arg-278.

This sequence belongs to the radical SAM superfamily. Biotin synthase family. Homodimer. The cofactor is [4Fe-4S] cluster. [2Fe-2S] cluster serves as cofactor.

The catalysed reaction is (4R,5S)-dethiobiotin + (sulfur carrier)-SH + 2 reduced [2Fe-2S]-[ferredoxin] + 2 S-adenosyl-L-methionine = (sulfur carrier)-H + biotin + 2 5'-deoxyadenosine + 2 L-methionine + 2 oxidized [2Fe-2S]-[ferredoxin]. It participates in cofactor biosynthesis; biotin biosynthesis; biotin from 7,8-diaminononanoate: step 2/2. Catalyzes the conversion of dethiobiotin (DTB) to biotin by the insertion of a sulfur atom into dethiobiotin via a radical-based mechanism. This Brachyspira hyodysenteriae (strain ATCC 49526 / WA1) protein is Biotin synthase.